A 208-amino-acid polypeptide reads, in one-letter code: Large ribosomal subunit protein eL13 (208 aa).

It belongs to the eukaryotic ribosomal protein eL13 family.

The sequence is that of Large ribosomal subunit protein eL13 (RPL13) from Chlamydomonas sp. (strain W80).